A 218-amino-acid polypeptide reads, in one-letter code: uncharacterized protein (218 aa).

This is an uncharacterized protein from Ureaplasma parvum serovar 3 (strain ATCC 700970).